The sequence spans 328 residues: Interferon regulatory factor 1 (328 aa).

A DNA-binding region (IRF tryptophan pentad repeat) is located at residues 5-113; that stretch reads RMRMRPWLEM…SAVRVYRMLP (109 aa). Residue lysine 78 is modified to N6-acetyllysine. Residues 92-164 form a disordered region; sequence EEVKDQSRNK…STLPDDHSSY (73 aa). Residues 141–157 are compositionally biased toward low complexity; sequence GDSSPDTLSDGLSSSTL. Glycyl lysine isopeptide (Lys-Gly) (interchain with G-Cter in SUMO) cross-links involve residues lysine 276 and lysine 300.

It belongs to the IRF family. As to quaternary structure, monomer. Homodimer. Interacts with EP300. Interacts with MYD88. Interacts with PIAS3. Interacts with SPOP. Phosphorylated by CK2 and this positively regulates its activity. Post-translationally, sumoylation represses the transcriptional activity and displays enhanced resistance to protein degradation. Sumoylated by UBE2I/UBC9 and SUMO1. Inactivates the tumor suppressor activity. Elevated levels in tumor cells. Major site is Lys-276. Sumoylation is enhanced by PIAS3. Desumoylated by SENP1 in tumor cells and appears to compete with ubiquitination on C-terminal sites. In terms of processing, ubiquitinated in a SPOP-depedent manner. Appears to compete with sumoylation on C-terminal sites.

The protein resides in the nucleus. The protein localises to the cytoplasm. Its activity is regulated as follows. Activated by MYD88. Functionally, transcriptional regulator which displays a remarkable functional diversity in the regulation of cellular responses. Regulates transcription of IFN and IFN-inducible genes, host response to viral and bacterial infections, regulation of many genes expressed during hematopoiesis, inflammation, immune responses and cell proliferation and differentiation, regulation of the cell cycle and induction of growth arrest and programmed cell death following DNA damage. Stimulates both innate and acquired immune responses through the activation of specific target genes and can act as a transcriptional activator and repressor regulating target genes by binding to an interferon-stimulated response element (ISRE) in their promoters. Has an essentail role in IFNG-dependent immunity to mycobacteria. Binds to a consensus sequence in gene promoters. Its target genes for transcriptional activation activity include: genes involved in anti-viral response, such as IFN-alpha/beta, RIGI, TNFSF10/TRAIL, ZBP1, OAS1/2, PIAS1/GBP, EIF2AK2/PKR and RSAD2/viperin; antibacterial response, such as GBP2, GBP5 and NOS2/INOS; anti-proliferative response, such as p53/TP53, LOX and CDKN1A; apoptosis, such as BBC3/PUMA, CASP1, CASP7 and CASP8; immune response, such as IL7, IL12A/B and IL15, PTGS2/COX2 and CYBB; DNA damage responses and DNA repair, such as POLQ/POLH; MHC class I expression, such as TAP1, PSMB9/LMP2, PSME1/PA28A, PSME2/PA28B and B2M and MHC class II expression, such as CIITA; metabolic enzymes, such as ACOD1/IRG1. Represses genes involved in anti-proliferative response, such as BIRC5/survivin, CCNB1, CCNE1, CDK1, CDK2 and CDK4 and in immune response, such as FOXP3, IL4, ANXA2 and TLR4. Stimulates p53/TP53-dependent transcription through enhanced recruitment of EP300 leading to increased acetylation of p53/TP53. Plays an important role in immune response directly affecting NK maturation and activity, macrophage production of IL12, Th1 development and maturation of CD8+ T-cells. Also implicated in the differentiation and maturation of dendritic cells and in the suppression of regulatory T (Treg) cells development. Acts as a tumor suppressor and plays a role not only in antagonism of tumor cell growth but also in stimulating an immune response against tumor cells. This Rattus norvegicus (Rat) protein is Interferon regulatory factor 1 (Irf1).